The sequence spans 171 residues: Dual specificity protein phosphatase OPG106 (171 aa).

Residues 23-171 form the Tyrosine-protein phosphatase domain; that stretch reads SPTIMTRVTN…IIEKYVIDKN (149 aa). Cysteine 110 serves as the catalytic Phosphocysteine intermediate.

It belongs to the protein-tyrosine phosphatase family. Non-receptor class dual specificity subfamily. Homodimer.

It is found in the virion. The protein resides in the host cytoplasm. The enzyme catalyses O-phospho-L-tyrosyl-[protein] + H2O = L-tyrosyl-[protein] + phosphate. It carries out the reaction O-phospho-L-seryl-[protein] + H2O = L-seryl-[protein] + phosphate. Serine/tyrosine phosphatase which down-regulates cellular antiviral response by dephosphorylating activated host STAT1 and blocking interferon (IFN)-stimulated innate immune responses. Dephosphorylates the OPG144 protein. The protein is Dual specificity protein phosphatase OPG106 (OPG106) of Homo sapiens (Human).